The sequence spans 320 residues: Aspartate carbamoyltransferase catalytic subunit (320 aa).

Arg-65 and Thr-66 together coordinate carbamoyl phosphate. Residue Lys-93 participates in L-aspartate binding. Residues Arg-115, His-143, and Gln-146 each contribute to the carbamoyl phosphate site. 2 residues coordinate L-aspartate: Arg-176 and Arg-230. Gly-271 and Pro-272 together coordinate carbamoyl phosphate.

This sequence belongs to the aspartate/ornithine carbamoyltransferase superfamily. ATCase family. As to quaternary structure, heterododecamer (2C3:3R2) of six catalytic PyrB chains organized as two trimers (C3), and six regulatory PyrI chains organized as three dimers (R2).

The enzyme catalyses carbamoyl phosphate + L-aspartate = N-carbamoyl-L-aspartate + phosphate + H(+). It functions in the pathway pyrimidine metabolism; UMP biosynthesis via de novo pathway; (S)-dihydroorotate from bicarbonate: step 2/3. In terms of biological role, catalyzes the condensation of carbamoyl phosphate and aspartate to form carbamoyl aspartate and inorganic phosphate, the committed step in the de novo pyrimidine nucleotide biosynthesis pathway. The protein is Aspartate carbamoyltransferase catalytic subunit of Maricaulis maris (strain MCS10) (Caulobacter maris).